The sequence spans 251 residues: DNA repair protein RecO (251 aa).

This sequence belongs to the RecO family.

Functionally, involved in DNA repair and RecF pathway recombination. The protein is DNA repair protein RecO of Nitratidesulfovibrio vulgaris (strain ATCC 29579 / DSM 644 / CCUG 34227 / NCIMB 8303 / VKM B-1760 / Hildenborough) (Desulfovibrio vulgaris).